We begin with the raw amino-acid sequence, 146 residues long: Hut operon positive regulatory protein (146 aa).

It belongs to the HutP family. In terms of assembly, homohexamer.

Its function is as follows. Antiterminator that binds to cis-acting regulatory sequences on the mRNA in the presence of histidine, thereby suppressing transcription termination and activating the hut operon for histidine utilization. This chain is Hut operon positive regulatory protein, found in Bacillus mycoides (strain KBAB4) (Bacillus weihenstephanensis).